Here is a 226-residue protein sequence, read N- to C-terminus: Probable functional amyloid protease FapD (226 aa).

An N-terminal signal peptide occupies residues 1–18 (MRTLILSLLLLVDLTTQA). The Peptidase C39 domain occupies 50-180 (QKTDFSCGAA…KGWNGIVFAV (131 aa)). Cys-56 is an active-site residue.

The protein belongs to the FapD family.

The protein resides in the periplasm. Probable protease that might be involved in processing fibril precursors. Upon overexpression of the endogenous six-gene locus (fapA-fapF), cells form large clumps during liquid growth, make large amounts of biofilm and produce amyloid fibrils. In Pseudomonas aeruginosa (strain ATCC 15692 / DSM 22644 / CIP 104116 / JCM 14847 / LMG 12228 / 1C / PRS 101 / PAO1), this protein is Probable functional amyloid protease FapD.